A 188-amino-acid polypeptide reads, in one-letter code: MNGDDAFVRRPRVGSQIPEKMQKAFDDIAKYFSEKEWEKMKASEKIIYVYMKRKYEAMTKLGFKATLPPFMRNKRVADFQGNDFDNDPNRGNQVEHPQMTFGRLQGIFPKITPEKPAEEGNDSKGVPEASGPQNNGKQLRPSGKLNTSEKVNKTSGPKRGKHAWTHRVRERKQLVIYEEISDPQEDDE.

The region spanning 20 to 83 is the KRAB-related domain; sequence KMQKAFDDIA…KRVADFQGND (64 aa). Positions 78-188 are disordered; that stretch reads DFQGNDFDND…EISDPQEDDE (111 aa). A compositionally biased stretch (basic and acidic residues) spans 112 to 122; the sequence is TPEKPAEEGND. The segment covering 144 to 155 has biased composition (polar residues); the sequence is KLNTSEKVNKTS. A compositionally biased stretch (basic residues) spans 156–170; the sequence is GPKRGKHAWTHRVRE. Over residues 179-188 the composition is skewed to acidic residues; it reads EISDPQEDDE.

It belongs to the SSX family.

Could act as a modulator of transcription. In Homo sapiens (Human), this protein is Protein SSX5 (SSX5).